Consider the following 283-residue polypeptide: Pseudokinase OPG198 (283 aa).

The ATP site is built by Met1 and Lys30. Residues 1 to 283 (MESFKYCFDN…DRLRKLFIQD (283 aa)) enclose the Protein kinase domain.

The protein belongs to the protein kinase superfamily. Ser/Thr protein kinase family. Poxviruses subfamily. In terms of assembly, interacts with B1/VPK1. Interacts with host VRK1. Interacts with host VRK2.

It localises to the host nucleus. Both catalytically active kinases B1/VPK1 and host VRK2 repress B12 inhibitory activity in a B1/VPK1 deletion mutant strain. Pseudokinase that plays a role in viral DNA replication repression by activating the antiviral protein BANF1 and inhibiting the activity of host VRK1, a cellular modulator of BANF1. This is Pseudokinase OPG198 (OPG198) from Vaccinia virus (strain Western Reserve) (VACV).